Consider the following 64-residue polypeptide: Large ribosomal subunit protein bL35 (64 aa).

It belongs to the bacterial ribosomal protein bL35 family.

The sequence is that of Large ribosomal subunit protein bL35 from Shewanella putrefaciens (strain CN-32 / ATCC BAA-453).